The primary structure comprises 70 residues: Basic phospholipase A2 2 (70 aa).

Cysteines 28 and 44 form a disulfide. H47 is a catalytic residue. Position 48 (D48) interacts with Ca(2+).

Belongs to the phospholipase A2 family. Group II subfamily. D49 sub-subfamily. Ca(2+) serves as cofactor. Expressed by the venom gland.

It localises to the secreted. It carries out the reaction a 1,2-diacyl-sn-glycero-3-phosphocholine + H2O = a 1-acyl-sn-glycero-3-phosphocholine + a fatty acid + H(+). In terms of biological role, snake venom phospholipase A2 (PLA2) that exhibits strong myotoxicity. PLA2 catalyzes the calcium-dependent hydrolysis of the 2-acyl groups in 3-sn-phosphoglycerides. The chain is Basic phospholipase A2 2 from Trimeresurus stejnegeri (Chinese green tree viper).